Reading from the N-terminus, the 321-residue chain is Aspartate carbamoyltransferase catalytic subunit (321 aa).

R70 and T71 together coordinate carbamoyl phosphate. K98 serves as a coordination point for L-aspartate. Positions 120, 148, and 151 each coordinate carbamoyl phosphate. 2 residues coordinate L-aspartate: R181 and R235. The carbamoyl phosphate site is built by G276 and P277.

It belongs to the aspartate/ornithine carbamoyltransferase superfamily. ATCase family. In terms of assembly, heterododecamer (2C3:3R2) of six catalytic PyrB chains organized as two trimers (C3), and six regulatory PyrI chains organized as three dimers (R2).

It carries out the reaction carbamoyl phosphate + L-aspartate = N-carbamoyl-L-aspartate + phosphate + H(+). The protein operates within pyrimidine metabolism; UMP biosynthesis via de novo pathway; (S)-dihydroorotate from bicarbonate: step 2/3. Its function is as follows. Catalyzes the condensation of carbamoyl phosphate and aspartate to form carbamoyl aspartate and inorganic phosphate, the committed step in the de novo pyrimidine nucleotide biosynthesis pathway. This Gluconacetobacter diazotrophicus (strain ATCC 49037 / DSM 5601 / CCUG 37298 / CIP 103539 / LMG 7603 / PAl5) protein is Aspartate carbamoyltransferase catalytic subunit.